The chain runs to 238 residues: Phosphatidylcholine synthase (238 aa).

Over 1–16 (MPVNLSMTPINKAKAW) the chain is Cytoplasmic. A helical transmembrane segment spans residues 17 to 37 (GVHAVTASGVILALLALLALV). The Periplasmic portion of the chain corresponds to 38–41 (DNKP). A helical membrane pass occupies residues 42–62 (QACLLWLGLALLVDGLDGTLA). The Cytoplasmic segment spans residues 63 to 75 (RKYEVKEMLPHFD). Residues 76–96 (GSVLDLVIDYLTYVFIPAIFI) traverse the membrane as a helical segment. Residues 97–104 (YRYIPLPE) lie on the Periplasmic side of the membrane. The helical transmembrane segment at 105 to 125 (HFELLAVGVILVSSLFCFCNV) threads the bilayer. The Cytoplasmic portion of the chain corresponds to 126–132 (NMKSTDN). The chain crosses the membrane as a helical span at residues 133–153 (YFVGFPAAWNVVAVYFYVLDL). Residues 154–155 (HP) are Periplasmic-facing. The chain crosses the membrane as a helical span at residues 156–176 (WVNLATVLVLAALTLTRMKFL). At 177 to 183 (HPFRVRQ) the chain is on the cytoplasmic side. The helical transmembrane segment at 184–204 (FMPLNIAVTFVWLISSGLLIV) threads the bilayer. The Periplasmic segment spans residues 205–209 (QQPAD). Residues 210-230 (LPILLGLWFAASAYFVGICLW) traverse the membrane as a helical segment. Over 231–238 (RSAREWFG) the chain is Cytoplasmic.

This sequence belongs to the CDP-alcohol phosphatidyltransferase class-I family. Mn(2+) is required as a cofactor.

It localises to the cell inner membrane. The enzyme catalyses a CDP-1,2-diacyl-sn-glycerol + choline = a 1,2-diacyl-sn-glycero-3-phosphocholine + CMP + H(+). Functionally, condenses choline with CDP-diglyceride to produce phosphatidylcholine and CMP. This is Phosphatidylcholine synthase from Pseudomonas aeruginosa (strain ATCC 15692 / DSM 22644 / CIP 104116 / JCM 14847 / LMG 12228 / 1C / PRS 101 / PAO1).